A 264-amino-acid chain; its full sequence is Phosphonoacetaldehyde hydrolase (264 aa).

Asp9 serves as the catalytic Nucleophile. The Mg(2+) site is built by Asp9 and Ala11. Residue Lys50 is the Schiff-base intermediate with substrate of the active site. Asp183 is a Mg(2+) binding site.

It belongs to the HAD-like hydrolase superfamily. PhnX family. In terms of assembly, homodimer. The cofactor is Mg(2+).

It carries out the reaction phosphonoacetaldehyde + H2O = acetaldehyde + phosphate + H(+). Its function is as follows. Involved in phosphonate degradation. This chain is Phosphonoacetaldehyde hydrolase, found in Bacillus cytotoxicus (strain DSM 22905 / CIP 110041 / 391-98 / NVH 391-98).